Here is a 258-residue protein sequence, read N- to C-terminus: Countin-1 (258 aa).

The signal sequence occupies residues M1–S21. The region spanning L22–D106 is the Saposin B-type domain. Disulfide bonds link C25–C102, C28–C96, and C56–C69. N-linked (GlcNAc...) asparagine glycans are attached at residues N121 and N215. Residues A233–A248 are compositionally biased toward low complexity. Positions A233–F258 are disordered. Over residues S249–F258 the composition is skewed to gly residues.

It belongs to the countin family. Component of the counting factor (CF) complex, which includes cf60, cf50, cf45-1 and ctnA.

It is found in the secreted. Functionally, cell-counting factor that limits the maximum size of the multicellular structure. May down-regulate the expression of gp24, which mediates cell adhesion. The protein is Countin-1 (ctnA) of Dictyostelium discoideum (Social amoeba).